The primary structure comprises 409 residues: MLISNVGINPAAYLNNHSVENSSQTASQSVSAKDILNSIGISSSKVSDLGLSPTLSAPAPGVLTQTPGTITSFLKASIQNTDMNQDLNALANNVTTKANEVVQTQLREQQAEVGKFFDISGMSSSAVALLAAANTLMLTLNQADSKLSGKLSLVSFDAAKTTASSMMREGMNALSGSISQSALQLGITGVGAKLEYKGLQNERGALKHNAAKIDKLTTESHSIKNVLNGQNSVKLGAEGVDSLKSLNMKKTGTDATKNLNDATLKSNAGTSATESLGIKNSNKQISPEHQAILSKRLESVESDIRLEQNTMDMTRIDARKMQMTGDLIMKNSVTVGGIAGASRQYAATQERSEQQISQVNNRVASTASDEARESSRKSTSLIQEMLKTMESINQSKASALAAIAGNIRA.

Residues 119 to 140 (ISGMSSSAVALLAAANTLMLTL) traverse the membrane as a helical segment. The span at 350-368 (ERSEQQISQVNNRVASTAS) shows a compositional bias: polar residues. The disordered stretch occupies residues 350–378 (ERSEQQISQVNNRVASTASDEARESSRKS).

This sequence belongs to the SctB/SipC family. The core secretion machinery of the T3SS is composed of approximately 20 different proteins, including cytoplasmic components, a base, an export apparatus and a needle. This subunit is involved in the formation of a pore, called the translocon, in host membrane.

Its subcellular location is the secreted. The protein localises to the host membrane. In terms of biological role, component of the type III secretion system 1 (SPI-1 T3SS), also called injectisome, which is used to inject bacterial effector proteins into eukaryotic host cells. SipB/SctE1 and SipC/SctB1 are inserted into the host membrane where they form a pore and allow the translocation of effector proteins into the cytosol of target cells. This chain is SPI-1 type 3 secretion system translocon protein SctB, found in Salmonella typhi.